A 184-amino-acid chain; its full sequence is Ethylene-responsive transcription factor ERF010 (184 aa).

The segment at residues proline 20–proline 77 is a DNA-binding region (AP2/ERF). Positions glutamine 123–histidine 184 are disordered. The span at leucine 161–aspartate 172 shows a compositional bias: basic and acidic residues. Acidic residues predominate over residues glutamate 174–histidine 184.

Belongs to the AP2/ERF transcription factor family. ERF subfamily.

Its subcellular location is the nucleus. Functionally, probably acts as a transcriptional activator. Binds to the GCC-box pathogenesis-related promoter element. May be involved in the regulation of gene expression by stress factors and by components of stress signal transduction pathways. The polypeptide is Ethylene-responsive transcription factor ERF010 (ERF010) (Arabidopsis thaliana (Mouse-ear cress)).